Consider the following 943-residue polypeptide: MLKLLLGDPNTRKLKRYQPIVEEINFLEEEISQLTDDELRKETQNLKSTISAELDLKKQKELLEEFLPKAFAIVREASKRVLDMRHFDVQLIGGIVLNECQIAEMKTGEGKTLVATLPCYLNALTGKGVHVVTVNDYLARRDAEWMGQVHRFLGLSVGLIQQDMNPLERKKNYDCDITYATNSELGFDYLRDNMATDINEVVQRKFNYCVIDEVDSILIDEARTPLIISGQVERPQEKYQKAAELSLELLKAKELSKDGIDPEGDYEVDEKQRSCILTDQGFAKCEEYLGVSDLYNPQDPWAHYITNALKAKELFIKDVNYIIKNEEAVIVDEFTGRVMPGRRWSDGQHQAIEAKESLKIQPETQTLASITYQNFFLLYPGLAGMTGTAKTEEVEFEKTYKLESTVIPTNQTRKRQDWSDQVFKTEIGKWKAVAKETAQIHREGRPVLVGTTSVEKSELLSSLLSEEKIPHNLLNAKPENVEREAEIVAQAGRAGAVTIATNMAGRGTDIILGGNSDYMARLKLKEILVPLLVKPDNEHKPPIPKQRSSKSKGGFSKKAVTNLKKNISNSSTSLFPCKLDEAFEKKLSVLSDELVKSWGDRQLSVLELDDRIATAAEKAPTDDNSIKLLRESLSDVKKEYEKVLIHEEEKVREAGGLHVIGTERHESRRVDNQLRGRAGRQGDLGSTRFFLSLDDNLLRIFGGDRVANLMNAFRVDEDMPIESGMLTRSLESAQKKVETYYYDIRKQVFEYDEVMNNQRKAVYGERLRVLKGIDLKRQVIGYGERTMIEIVDAYINPDLPPEEWNIDQLISKVKEFIYLLDDLKSDDINLLSIEELKNYLQEQLRIAYDLKESQIEKIRPGLMREAERFFILQQIDNLWREHLQSMDSLRESVGLRGYGQKDPLIEYKNEGYDMFLEMMTNMRRNVIYSMFMFQPKTDVNEKN.

Residues Q90, 108 to 112 (GEGKT), and D509 contribute to the ATP site. The tract at residues 537 to 556 (NEHKPPIPKQRSSKSKGGFS) is disordered.

The protein belongs to the SecA family. As to quaternary structure, monomer and homodimer. Part of the essential Sec protein translocation apparatus which comprises SecA, SecYEG and auxiliary proteins SecDF. Other proteins may also be involved.

It localises to the cell inner membrane. It is found in the cellular thylakoid membrane. Its subcellular location is the cytoplasm. The catalysed reaction is ATP + H2O + cellular proteinSide 1 = ADP + phosphate + cellular proteinSide 2.. Its function is as follows. Part of the Sec protein translocase complex. Interacts with the SecYEG preprotein conducting channel. Has a central role in coupling the hydrolysis of ATP to the transfer of proteins into and across the cell membrane, serving as an ATP-driven molecular motor driving the stepwise translocation of polypeptide chains across the membrane. Probably participates in protein translocation into and across both the cytoplasmic and thylakoid membranes in cyanobacterial cells. The sequence is that of Protein translocase subunit SecA from Prochlorococcus marinus (strain MIT 9301).